Consider the following 523-residue polypeptide: MVEETSSGGGSSASPIKTIVVLVQENRSFDHMLGWFKELNPEIDGVSESEPRSNPLSTSDPNSAQIFFGKESQNIDPDPGHSFQAIYEQVFGKPFSDESPYPDPKMNGFVQNAEAITKGMSEKVVMQGFPPEKLPVFKELVQEFAVCDRWFSSLPSSTQPNRLYVHAATSNGAFSNDTNTLVRGFPQRTVFESLEESGFTFGIYYQSFPNCLFYRNMRKLKYVDNFHQYHLSFKRHCKEGKLPNYVVIEPRYFKILSAPANDDHPKNDVVEGQNLVKEIYEALRASPQWNEILFVVVYDEHGGYYDHVPTPVIGVPNPDGLVGPEPYNFKFDRLGVRVPALLISPWIEPGTVLHEPNGPEPTSQFEHSSIPATLKKIFNLKSFLTKRDEWAGTLDAVINRTSPRTDCPVTLPELPRARDIDIGTQEEDEDLTDFQIELIQAAAVLKGDHIKDIYPFKLADKMKVLDAARYVEEAFTRFHGESKKAKEEGRDEHEIVDLSKGSTRHSTPKSFVQKLFSCLICDN.

Residues Asp44–Ala64 are disordered. Residues Arg52–Ala64 show a composition bias toward polar residues.

Belongs to the bacterial phospholipase C family. Expressed in root tips, cotyledons, on leaf margins, stems, young anthers and funiculus.

It catalyses the reaction a 1-acyl-sn-glycero-3-phosphate + H2O = a 1-acyl-sn-glycerol + phosphate. In terms of biological role, possesses specific phosphatase activity toward lysophosphatidic acid (LPA) in vitro. Does not show phospholipase C activity. May play a role in signal transduction and storage lipid synthesis. May be involved in brassinolide-mediated signaling in root development. The protein is Non-specific phospholipase C3 (NPC3) of Arabidopsis thaliana (Mouse-ear cress).